Reading from the N-terminus, the 663-residue chain is UvrABC system protein B (663 aa).

One can recognise a Helicase ATP-binding domain in the interval aspartate 26–proline 414. Position 39–46 (glycine 39–threonine 46) interacts with ATP. Residues tyrosine 92 to isoleucine 115 carry the Beta-hairpin motif. The Helicase C-terminal domain maps to glutamine 430 to leucine 596. A UVR domain is found at valine 624–glutamine 659.

The protein belongs to the UvrB family. In terms of assembly, forms a heterotetramer with UvrA during the search for lesions. Interacts with UvrC in an incision complex.

It is found in the cytoplasm. In terms of biological role, the UvrABC repair system catalyzes the recognition and processing of DNA lesions. A damage recognition complex composed of 2 UvrA and 2 UvrB subunits scans DNA for abnormalities. Upon binding of the UvrA(2)B(2) complex to a putative damaged site, the DNA wraps around one UvrB monomer. DNA wrap is dependent on ATP binding by UvrB and probably causes local melting of the DNA helix, facilitating insertion of UvrB beta-hairpin between the DNA strands. Then UvrB probes one DNA strand for the presence of a lesion. If a lesion is found the UvrA subunits dissociate and the UvrB-DNA preincision complex is formed. This complex is subsequently bound by UvrC and the second UvrB is released. If no lesion is found, the DNA wraps around the other UvrB subunit that will check the other stand for damage. The chain is UvrABC system protein B from Legionella pneumophila subsp. pneumophila (strain Philadelphia 1 / ATCC 33152 / DSM 7513).